The primary structure comprises 152 residues: Nucleoside diphosphate kinase A (152 aa).

ATP contacts are provided by K12, F60, R88, and T94. Residue K100 forms a Glycyl lysine isopeptide (Lys-Gly) (interchain with G-Cter in ubiquitin) linkage. ATP-binding residues include R105 and N115. H118 acts as the Pros-phosphohistidine intermediate in catalysis. S120 and S122 each carry phosphoserine. Position 124 is an N6-acetyllysine (K124). Position 125 is a phosphoserine (S125).

The protein belongs to the NDK family. In terms of assembly, hexamer of two different chains: An and B (A6, A5B, A4B2, A3B3, A2B4, AB5, B6). Interacts with PRUNE1. Component of the SET complex, composed of at least ANP32A, APEX1, HMGB2, NME1, SET and TREX1. Within this complex, interacts directly with SET. Also interacts with TREX1, but only following translocation to the nucleus. The cofactor is Mg(2+).

The protein localises to the cytoplasm. It is found in the nucleus. It carries out the reaction a 2'-deoxyribonucleoside 5'-diphosphate + ATP = a 2'-deoxyribonucleoside 5'-triphosphate + ADP. The catalysed reaction is a ribonucleoside 5'-diphosphate + ATP = a ribonucleoside 5'-triphosphate + ADP. With respect to regulation, autophosphorylation at His-118 increases serine/threonine protein kinase activity of the enzyme. Interaction with the SET complex inhibits exonuclease activity. In terms of biological role, major role in the synthesis of nucleoside triphosphates other than ATP. The ATP gamma phosphate is transferred to the NDP beta phosphate via a ping-pong mechanism, using a phosphorylated active-site intermediate. Possesses nucleoside-diphosphate kinase, serine/threonine-specific protein kinase, geranyl and farnesyl pyrophosphate kinase, histidine protein kinase and 3'-5' exonuclease activities. Involved in cell proliferation, differentiation and development, signal transduction, G protein-coupled receptor endocytosis, and gene expression. Required for neural development including neural patterning and cell fate determination. During GZMA-mediated cell death, works in concert with TREX1. NME1 nicks one strand of DNA and TREX1 removes bases from the free 3' end to enhance DNA damage and prevent DNA end reannealing and rapid repair. The chain is Nucleoside diphosphate kinase A (Nme1) from Mus musculus (Mouse).